Consider the following 81-residue polypeptide: Putative membrane protein insertion efficiency factor (81 aa).

The tract at residues 61–81 is disordered; that stretch reads NDGGYDPVPPAPSSRTSSIAE.

This sequence belongs to the UPF0161 family.

It localises to the cell inner membrane. Its function is as follows. Could be involved in insertion of integral membrane proteins into the membrane. The chain is Putative membrane protein insertion efficiency factor from Pseudomonas putida (strain ATCC 47054 / DSM 6125 / CFBP 8728 / NCIMB 11950 / KT2440).